The primary structure comprises 274 residues: Anamorsin homolog (274 aa).

The N-terminal SAM-like domain stretch occupies residues 1 to 154 (MDRTRKQCSV…KKPSWKIGSS (154 aa)). The linker stretch occupies residues 154-185 (SFALKKSTKGSVKVNLDDDLIDEDSLLTEEDM). 4 residues coordinate [2Fe-2S] cluster: C196, C205, C208, and C210. Residues 196–210 (CEVGSTRKACKNCTC) form a fe-S binding site A region. Residues C235, C238, C246, and C249 each contribute to the [4Fe-4S] cluster site. 2 consecutive short sequence motifs (cx2C motif) follow at residues 235-238 (CGSC) and 246-249 (CSTC). Positions 235 to 249 (CGSCGLGDAFRCSTC) are fe-S binding site B.

It belongs to the anamorsin family. In terms of assembly, monomer. It depends on [2Fe-2S] cluster as a cofactor. The cofactor is [4Fe-4S] cluster.

It is found in the cytoplasm. Its subcellular location is the mitochondrion intermembrane space. Functionally, component of the cytosolic iron-sulfur (Fe-S) protein assembly (CIA) machinery. Required for the maturation of extramitochondrial Fe-S proteins. Part of an electron transfer chain functioning in an early step of cytosolic Fe-S biogenesis, facilitating the de novo assembly of a [4Fe-4S] cluster on the cytosolic Fe-S scaffold complex. Electrons are transferred from NADPH via a FAD- and FMN-containing diflavin oxidoreductase. Together with the diflavin oxidoreductase, also required for the assembly of the diferric tyrosyl radical cofactor of ribonucleotide reductase (RNR), probably by providing electrons for reduction during radical cofactor maturation in the catalytic small subunit. The protein is Anamorsin homolog of Ricinus communis (Castor bean).